Here is a 222-residue protein sequence, read N- to C-terminus: Large ribosomal subunit protein uL1 (222 aa).

The protein belongs to the universal ribosomal protein uL1 family. In terms of assembly, part of the 50S ribosomal subunit.

In terms of biological role, binds directly to 23S rRNA. Probably involved in E site tRNA release. Protein L1 is also a translational repressor protein, it controls the translation of its operon by binding to its mRNA. This chain is Large ribosomal subunit protein uL1, found in Pyrobaculum islandicum (strain DSM 4184 / JCM 9189 / GEO3).